A 394-amino-acid polypeptide reads, in one-letter code: Muscle cell intermediate filament protein AV71 (394 aa).

A coil 1B region spans residues 1-73; sequence AEINLVRRRV…RVHDQEITEL (73 aa). An IF rod domain is found at 1–239; sequence AEINLVRRRV…KMLEGEENRA (239 aa). The linker 12 stretch occupies residues 74–91; the sequence is QAMAARDTTPENREYFKN. A coil 2 region spans residues 92-239; sequence ELSSAIRDIR…KMLEGEENRA (148 aa). Residues 240–394 are tail; it reads GLRQLVEQVV…HIQRSSHTIN (155 aa). Residues 272 to 389 form the LTD domain; sequence SRTSFQRSAK…EERASHIQRS (118 aa).

It belongs to the intermediate filament family.

This Acanthocheilonema viteae (Filarial nematode worm) protein is Muscle cell intermediate filament protein AV71 (AV71).